The chain runs to 99 residues: Acylphosphatase-2 (99 aa).

Serine 2 is modified (N-acetylserine). The region spanning 9-99 (SVDYEVFGRV…LEYSNFSIRY (91 aa)) is the Acylphosphatase-like domain. Active-site residues include arginine 24 and asparagine 42. The residue at position 93 (serine 93) is a Phosphoserine.

It belongs to the acylphosphatase family.

It catalyses the reaction an acyl phosphate + H2O = a carboxylate + phosphate + H(+). Functionally, its physiological role is not yet clear. The chain is Acylphosphatase-2 (ACYP2) from Homo sapiens (Human).